A 196-amino-acid polypeptide reads, in one-letter code: Imidazoleglycerol-phosphate dehydratase (196 aa).

It belongs to the imidazoleglycerol-phosphate dehydratase family.

It is found in the cytoplasm. The enzyme catalyses D-erythro-1-(imidazol-4-yl)glycerol 3-phosphate = 3-(imidazol-4-yl)-2-oxopropyl phosphate + H2O. It functions in the pathway amino-acid biosynthesis; L-histidine biosynthesis; L-histidine from 5-phospho-alpha-D-ribose 1-diphosphate: step 6/9. This Phenylobacterium zucineum (strain HLK1) protein is Imidazoleglycerol-phosphate dehydratase.